The chain runs to 352 residues: Peptide chain release factor 1 (352 aa).

N5-methylglutamine is present on Q233. The segment at 288 to 309 is disordered; that stretch reads NAKDRKEQVGSGDRSERIRTYN. A compositionally biased stretch (basic and acidic residues) spans 289–306; that stretch reads AKDRKEQVGSGDRSERIR.

Belongs to the prokaryotic/mitochondrial release factor family. Post-translationally, methylated by PrmC. Methylation increases the termination efficiency of RF1.

The protein localises to the cytoplasm. Peptide chain release factor 1 directs the termination of translation in response to the peptide chain termination codons UAG and UAA. The chain is Peptide chain release factor 1 from Helicobacter pylori (strain HPAG1).